We begin with the raw amino-acid sequence, 351 residues long: MNVAIVGATGYGGIQAVNLLKSNKNYKISYLGGNKSSGTKWSDNFPFINLESDNLIEKISIDRIADKANVALLCLPNGISSTLTRGLLEKGVKVIDLSADYRYKSLDQWKNIYSNEAKKYKRDDDDLCKEAVYGLPEINFNDISKARLIASPGCYPTSALIPLNPFLSQGIIDNEGIVIDSKSGTSGGGREPNQKSLFSECGDGLSAYGLINHRHTSEIEQIASFISGNDIELLFTPHLIPMTRGMHSTIYGRLRDPGLTSSDCRIILENYYRNYSHIRVLPVDIYPSTKWVKNTNEIHLSVKVDTRNGRVIILSVIDNLIKGQTGQAIQNLNLISGLPINNGLEMINHYP.

Cys154 is a catalytic residue.

Belongs to the NAGSA dehydrogenase family. Type 1 subfamily.

It is found in the cytoplasm. It catalyses the reaction N-acetyl-L-glutamate 5-semialdehyde + phosphate + NADP(+) = N-acetyl-L-glutamyl 5-phosphate + NADPH + H(+). It participates in amino-acid biosynthesis; L-arginine biosynthesis; N(2)-acetyl-L-ornithine from L-glutamate: step 3/4. In terms of biological role, catalyzes the NADPH-dependent reduction of N-acetyl-5-glutamyl phosphate to yield N-acetyl-L-glutamate 5-semialdehyde. This chain is N-acetyl-gamma-glutamyl-phosphate reductase, found in Prochlorococcus marinus subsp. pastoris (strain CCMP1986 / NIES-2087 / MED4).